A 187-amino-acid polypeptide reads, in one-letter code: Peroxisome assembly protein 22 (187 aa).

Residues 7–29 (NTFFGLAALGALGLGYSVYKSFI) form a helical membrane-spanning segment.

The protein belongs to the peroxin-22 family. Interacts with PEX4.

Its subcellular location is the peroxisome membrane. Functionally, involved in peroxisome biogenesis. In Komagataella pastoris (Yeast), this protein is Peroxisome assembly protein 22 (PEX22).